A 542-amino-acid polypeptide reads, in one-letter code: Anaerobic glycerol-3-phosphate dehydrogenase subunit A (542 aa).

Position 10–38 (10–38 (DVIIIGGGATGAGIARDCALRGLRVILVE)) interacts with FAD.

The protein belongs to the FAD-dependent glycerol-3-phosphate dehydrogenase family. In terms of assembly, composed of a catalytic GlpA/B dimer and of membrane bound GlpC. The cofactor is FAD. FMN is required as a cofactor.

Its subcellular location is the cell inner membrane. The enzyme catalyses a quinone + sn-glycerol 3-phosphate = dihydroxyacetone phosphate + a quinol. Its pathway is polyol metabolism; glycerol degradation via glycerol kinase pathway; glycerone phosphate from sn-glycerol 3-phosphate (anaerobic route): step 1/1. Its function is as follows. Conversion of glycerol 3-phosphate to dihydroxyacetone. Uses fumarate or nitrate as electron acceptor. The polypeptide is Anaerobic glycerol-3-phosphate dehydrogenase subunit A (glpA) (Escherichia coli O157:H7).